Reading from the N-terminus, the 220-residue chain is Large ribosomal subunit protein uL3 (220 aa).

The interval 137–159 (GASHGAHKNHRKPGSIGGASTPS) is disordered.

It belongs to the universal ribosomal protein uL3 family. Part of the 50S ribosomal subunit. Forms a cluster with proteins L14 and L19.

Functionally, one of the primary rRNA binding proteins, it binds directly near the 3'-end of the 23S rRNA, where it nucleates assembly of the 50S subunit. The polypeptide is Large ribosomal subunit protein uL3 (Renibacterium salmoninarum (strain ATCC 33209 / DSM 20767 / JCM 11484 / NBRC 15589 / NCIMB 2235)).